Reading from the N-terminus, the 249-residue chain is Elsinochromes biosynthesis cluster protein HP3 (249 aa).

An N-linked (GlcNAc...) asparagine glycan is attached at Asn106. Residues 138-158 traverse the membrane as a helical segment; that stretch reads VVFAFMLSAWLVWLITVYAFA.

Its subcellular location is the membrane. Part of the gene cluster that mediates the biosynthesis of elsinochromes, pigments consisting of at least four interconvertible tautomers (A, B, C and D) that have a core phenolic quinone to which various side chains are attached and which play an important role in fungal pathogenesis. The non-reducing polyketide synthase PKS1 was proposed to iteratively catalyze decarboxylation between acetyl-CoA and malonyl-CoA subunits for polyketide chain elongation. The released polyketide undergoes cyclization to form an aromatic ring, and proceeds via serial modification steps to produce the heptaketide back- bone of elsinochrome. As elsinochrome has a symmetrical structure, two identical heptaketides are fused to form a core 1,2-dihydrobenzo-perylene ring structure, which can then be successively modified to produce the various derivatives of elsinochrome. Some of these reactions may be cooperatively carried out, at least in part, by the products of RDT1, OXR1 and PKS1. PRF1, embedded within the elsinochrome cluster possibly functions to stabilize some of the biosynthetic enzymes required for elsinochrome production. As prefoldin is a hexamer containing 2 a and 4 b subunits, additional prefoldin subunits, whose coding genes may not immediately link to the elsinochrome biosynthetic gene cluster, are required to fulfill the chaperone function. In addition, no methyltransferase-coding gene exists within the biosynthetic gene cluster, even though elsinochrome has four methyl groups at positions C3, C7, C8 and C12. Apparently, the identified gene cluster does not contain the entire entourage of genes responsible for elsinochrome biosynthesis. Once elsinochrome is synthesized, it must be exported outside the fungal cells, which is probably accomplished by the ECT1 transporter, to avoid toxicity. The sequence is that of Elsinochromes biosynthesis cluster protein HP3 from Elsinoe fawcettii (Citrus scab fungus).